Here is a 558-residue protein sequence, read N- to C-terminus: Potassium-transporting ATPase potassium-binding subunit (558 aa).

Helical transmembrane passes span 1 to 21 (MEII…SGYL), 66 to 86 (FNGF…WLFL), 127 to 147 (MIVM…VCIA), 166 to 186 (IVRF…ILLM), 245 to 265 (IWSD…MLFL), 281 to 301 (ALIL…LTMW), 327 to 347 (FGAG…TGSV), 354 to 374 (LTPL…VFGG), 377 to 397 (VGLM…SLMV), 416 to 436 (IVLV…LAFM), 482 to 502 (ISTG…QLLI), and 531 to 551 (IVFI…LGPI).

Belongs to the KdpA family. In terms of assembly, the system is composed of three essential subunits: KdpA, KdpB and KdpC.

The protein localises to the cell membrane. Its function is as follows. Part of the high-affinity ATP-driven potassium transport (or Kdp) system, which catalyzes the hydrolysis of ATP coupled with the electrogenic transport of potassium into the cytoplasm. This subunit binds the extracellular potassium ions and delivers the ions to the membrane domain of KdpB through an intramembrane tunnel. In Staphylococcus aureus (strain bovine RF122 / ET3-1), this protein is Potassium-transporting ATPase potassium-binding subunit.